A 135-amino-acid chain; its full sequence is Fatty acid-binding protein 5 (135 aa).

Position 2 is an N-acetylalanine (A2). K17 carries the post-translational modification N6-acetyllysine. A Nuclear localization signal motif is present at residues 24-34; that stretch reads KELGVGIALRK. N-eicosanoyl ethanolamine is bound by residues C43 and R109. A disulfide bridge links C120 with C127. A (9Z,12Z)-octadecadienoate-binding site is contributed by 129-131; the sequence is RIY. Y131 contacts N-eicosanoyl ethanolamine. Y131 lines the hexadecanoate pocket. Y131 carries the phosphotyrosine modification.

The protein belongs to the calycin superfamily. Fatty-acid binding protein (FABP) family. Monomer. Homodimer. As to expression, keratinocytes; highly expressed in psoriatic skin. Expressed in brain gray matter.

Its subcellular location is the cytoplasm. It localises to the nucleus. The protein resides in the synapse. It is found in the postsynaptic density. The protein localises to the secreted. The catalysed reaction is hexadecanoate(out) = hexadecanoate(in). It carries out the reaction (9Z,12Z)-octadecadienoate(out) = (9Z,12Z)-octadecadienoate(in). It catalyses the reaction (9Z)-octadecenoate(out) = (9Z)-octadecenoate(in). Its function is as follows. Intracellular carrier for long-chain fatty acids and related active lipids, such as endocannabinoids, that regulate the metabolism and actions of the ligands they bind. In addition to the cytosolic transport, selectively delivers specific fatty acids from the cytosol to the nucleus, wherein they activate nuclear receptors. Delivers retinoic acid to the nuclear receptor peroxisome proliferator-activated receptor delta; which promotes proliferation and survival. May also serve as a synaptic carrier of endocannabinoid at central synapses and thus controls retrograde endocannabinoid signaling. Modulates inflammation by regulating PTGES induction via NF-kappa-B activation, and prostaglandin E2 (PGE2) biosynthesis during inflammation. May be involved in keratinocyte differentiation. This chain is Fatty acid-binding protein 5, found in Homo sapiens (Human).